We begin with the raw amino-acid sequence, 178 residues long: Probetacellulin (178 aa).

Residues 1-31 form the signal peptide; the sequence is MARAAPGSGASPLPLLPALALGLVILHCVVA. Residues 32–118 are Extracellular-facing; that stretch reads DGNSTRSPED…LFYLRGDRGQ (87 aa). An N-linked (GlcNAc...) asparagine glycan is attached at N34. The 41-residue stretch at 65 to 105 folds into the EGF-like domain; sequence HFSRCPKQYKHYCIKGRCRFVVAEQTPSCVCDEGYAGARCE. 3 disulfide bridges follow: C69/C82, C77/C93, and C95/C104. The propeptide at 112–178 is removed in mature form; that stretch reads LRGDRGQILV…NDDIQETSIA (67 aa). Residues 119-139 traverse the membrane as a helical segment; it reads ILVICLIAVMVIFIILVVSIC. Residues 140-178 lie on the Cytoplasmic side of the membrane; the sequence is TCCHPLRKRRKRRKKEEEMETLGKDITPINDDIQETSIA.

In terms of assembly, monomer. Interacts with EGFR and ERBB4. In terms of tissue distribution, expressed in a wide range of tissues, including the mammary gland.

It localises to the secreted. The protein localises to the extracellular space. Its subcellular location is the cell membrane. Growth factor that binds to EGFR, ERBB4 and other EGF receptor family members. Potent mitogen for retinal pigment epithelial cells and vascular smooth muscle cells. This is Probetacellulin (BTC) from Bos taurus (Bovine).